Consider the following 291-residue polypeptide: Transcription factor bHLH53 (291 aa).

The bHLH domain occupies 163-212 (PTLSSQSIAARGRRRRIAEKTHELGKLIPGGNKLNTAEMFQAAAKYVKFL).

In terms of assembly, homodimer. In terms of tissue distribution, expressed constitutively in roots, leaves, stems, and flowers.

It localises to the nucleus. This is Transcription factor bHLH53 (BHLH53) from Arabidopsis thaliana (Mouse-ear cress).